The following is a 64-amino-acid chain: uncharacterized protein (64 aa).

Residues 30–52 (FYAIFEMLFWPLVSLISVGLLGE) traverse the membrane as a helical segment.

Its subcellular location is the membrane. This is an uncharacterized protein from Archaeoglobus fulgidus (strain ATCC 49558 / DSM 4304 / JCM 9628 / NBRC 100126 / VC-16).